We begin with the raw amino-acid sequence, 360 residues long: Josephin-like protein (360 aa).

Residues 5–192 (ESKIYHERQR…NQLPLASNYR (188 aa)) enclose the Josephin domain. Cys18 serves as the catalytic Nucleophile. The active-site Proton acceptor is His129.

It catalyses the reaction Thiol-dependent hydrolysis of ester, thioester, amide, peptide and isopeptide bonds formed by the C-terminal Gly of ubiquitin (a 76-residue protein attached to proteins as an intracellular targeting signal).. Functionally, may act as a deubiquitinating enzyme. This is Josephin-like protein from Arabidopsis thaliana (Mouse-ear cress).